We begin with the raw amino-acid sequence, 193 residues long: Xanthine phosphoribosyltransferase (193 aa).

Residues L20 and T27 each coordinate xanthine. A 5-phospho-alpha-D-ribose 1-diphosphate-binding site is contributed by 128–132 (ANGQA). K156 provides a ligand contact to xanthine.

Belongs to the purine/pyrimidine phosphoribosyltransferase family. Xpt subfamily. In terms of assembly, homodimer.

It localises to the cytoplasm. The enzyme catalyses XMP + diphosphate = xanthine + 5-phospho-alpha-D-ribose 1-diphosphate. It functions in the pathway purine metabolism; XMP biosynthesis via salvage pathway; XMP from xanthine: step 1/1. Converts the preformed base xanthine, a product of nucleic acid breakdown, to xanthosine 5'-monophosphate (XMP), so it can be reused for RNA or DNA synthesis. This Streptococcus pneumoniae (strain CGSP14) protein is Xanthine phosphoribosyltransferase.